A 40-amino-acid chain; its full sequence is Protein YneP (40 aa).

This chain is Protein YneP, found in Escherichia coli (strain K12).